The chain runs to 117 residues: Appetite-regulating hormone (117 aa).

The N-terminal stretch at 1–23 (MPSPGTVCSLLLLGMLWLDLAMA) is a signal peptide. A lipid anchor (O-decanoyl serine; alternate) is attached at Ser26. The O-hexanoyl serine; alternate moiety is linked to residue Ser26. The O-octanoyl serine; alternate moiety is linked to residue Ser26. The disordered stretch occupies residues 29 to 50 (SPEHQRVQQRKESKKPPAKLQP). Basic and acidic residues predominate over residues 31 to 43 (EHQRVQQRKESKK). Residues 52–75 (ALAGWLRPEDGGQAEGAEDELEVR) constitute a propeptide, removed in mature form. Position 98 is a leucine amide (Leu98). Positions 99–117 (GKFLQDILWEEAKEAPADK) are cleaved as a propeptide — removed in mature form.

Belongs to the motilin family. Post-translationally, O-octanoylated by GOAT/MBOAT4. O-octanoylation or O-decanoylation is essential for ghrelin activity. The O-decanoylated forms Ghrelin-27-C10 and Ghrelin-28-C10 differ in the length of the carbon backbone of the carboxylic acid bound to Ser-26. A small fraction of ghrelin, ghrelin-28-C10:1, may be modified with a singly unsaturated carboxylic acid. Also O-acetylated and O-butyrylated on Ser-26 to minor levels. Amidation of Leu-98 is essential for obestatin activity. In terms of tissue distribution, highest level in stomach. All forms are found in serum as well. Other tissues compensate for the loss of ghrelin synthesis in the stomach following gastrectomy.

Its subcellular location is the secreted. Functionally, ghrelin is the ligand for growth hormone secretagogue receptor type 1 (GHSR). Induces the release of growth hormone from the pituitary. Has an appetite-stimulating effect, induces adiposity and stimulates gastric acid secretion. Involved in growth regulation. In terms of biological role, may be the ligand for GPR39. May have an appetite-reducing effect resulting in decreased food intake. May reduce gastric emptying activity and jejunal motility. This Homo sapiens (Human) protein is Appetite-regulating hormone (GHRL).